The chain runs to 322 residues: Putative DNA-directed RNA polymerase subunit alpha-like 2 (322 aa).

Residues 1–232 (MSNPNNGAEW…GLLSLVFQAE (232 aa)) form an alpha N-terminal domain (alpha-NTD) region. An alpha C-terminal domain (alpha-CTD) region spans residues 280–322 (EGPVTDEEGDSIDPTFTPVQKWDITMNSYQYSGETFQGLLSRF).

Belongs to the RNA polymerase alpha chain family. In plastids the minimal PEP RNA polymerase catalytic core is composed of four subunits: alpha, beta, beta', and beta''. When a (nuclear-encoded) sigma factor is associated with the core the holoenzyme is formed, which can initiate transcription.

The protein resides in the plastid. It is found in the chloroplast. It carries out the reaction RNA(n) + a ribonucleoside 5'-triphosphate = RNA(n+1) + diphosphate. Its function is as follows. DNA-dependent RNA polymerase catalyzes the transcription of DNA into RNA using the four ribonucleoside triphosphates as substrates. The chain is Putative DNA-directed RNA polymerase subunit alpha-like 2 (rpoAL2-A) from Pelargonium hortorum (Common geranium).